Consider the following 96-residue polypeptide: Large ribosomal subunit protein eL14 (96 aa).

Belongs to the eukaryotic ribosomal protein eL14 family.

The chain is Large ribosomal subunit protein eL14 from Sulfolobus acidocaldarius (strain ATCC 33909 / DSM 639 / JCM 8929 / NBRC 15157 / NCIMB 11770).